A 180-amino-acid chain; its full sequence is ATP synthase subunit delta (180 aa).

The protein belongs to the ATPase delta chain family. F-type ATPases have 2 components, F(1) - the catalytic core - and F(0) - the membrane proton channel. F(1) has five subunits: alpha(3), beta(3), gamma(1), delta(1), epsilon(1). CF(0) has four main subunits: a(1), b(1), b'(1) and c(10-14). The alpha and beta chains form an alternating ring which encloses part of the gamma chain. F(1) is attached to F(0) by a central stalk formed by the gamma and epsilon chains, while a peripheral stalk is formed by the delta, b and b' chains.

The protein resides in the cellular thylakoid membrane. In terms of biological role, f(1)F(0) ATP synthase produces ATP from ADP in the presence of a proton or sodium gradient. F-type ATPases consist of two structural domains, F(1) containing the extramembraneous catalytic core and F(0) containing the membrane proton channel, linked together by a central stalk and a peripheral stalk. During catalysis, ATP synthesis in the catalytic domain of F(1) is coupled via a rotary mechanism of the central stalk subunits to proton translocation. This protein is part of the stalk that links CF(0) to CF(1). It either transmits conformational changes from CF(0) to CF(1) or is implicated in proton conduction. This is ATP synthase subunit delta from Prochlorococcus marinus (strain MIT 9312).